Consider the following 859-residue polypeptide: ATP-dependent RNA helicase DDX24 (859 aa).

An N6-acetyllysine modification is found at lysine 17. A Phosphoserine modification is found at serine 60. The disordered stretch occupies residues 61–175 (PAKNPSSLFS…SQSTAAKVPK (115 aa)). N6-acetyllysine is present on lysine 71. Residues serine 82 and serine 94 each carry the phosphoserine modification. The span at 82–91 (SEEEEEEEGE) shows a compositional bias: acidic residues. Residues 95-105 (PKKKIKLKKSK) show a composition bias toward basic residues. A compositionally biased stretch (polar residues) spans 106 to 115 (NVATEGTSTQ). Positions 192-220 (SAWKDLFVPRPVLRALSFLGFSAPTPIQV) match the Q motif motif. A Helicase ATP-binding domain is found at 224 to 528 (APAIRDKLDI…RILHKKHTKK (305 aa)). Residue 237–244 (AETGSGKT) coordinates ATP. The segment at 262 to 374 (NAAPPPSNTE…QTGNLKQELD (113 aa)) is disordered. The segment covering 277 to 293 (TRPEAGAETRSPGKAEA) has biased composition (basic and acidic residues). Residues serine 287 and serine 295 each carry the phosphoserine modification. A compositionally biased stretch (acidic residues) spans 294–304 (ESDALPDDTVI). The residue at position 302 (threonine 302) is a Phosphothreonine. A Glycyl lysine isopeptide (Lys-Gly) (interchain with G-Cter in SUMO2) cross-link involves residue lysine 370. A DEAD box motif is present at residues 471 to 474 (DEAD). The 146-residue stretch at 578–723 (YLYYFLMQYP…LFPVQTKYMD (146 aa)) folds into the Helicase C-terminal domain. Glycyl lysine isopeptide (Lys-Gly) (interchain with G-Cter in SUMO2) cross-links involve residues lysine 624, lysine 808, and lysine 825. 2 stretches are compositionally biased toward polar residues: residues 799 to 814 (PLFT…TQSG) and 823 to 834 (PSKSESALSCLS). The interval 799–859 (PLFTESQKTK…EQPQPSTSAN (61 aa)) is disordered.

Belongs to the DEAD box helicase family. DDX24/MAK5 subfamily. As to quaternary structure, interacts with FADD. Interacts with RIPK1; this interaction disrupts RLR signaling activation of IFN-dependent transcription factor IRF7. Interacts with NIP7. Interacts with EP300; this interaction prevents TP53 acetylation mediated by EP300. Ubiquitinated by MDM2 without targeting DDX24 for proteasomal degradation. Instead, polyubiquitylated DDX24 promotes interaction with NIP7, a component of pre-rRNP processing complex, and associates with pre-rRNA molecules and pre-ribosomal particles.

Its subcellular location is the cytoplasm. The protein localises to the nucleus. It catalyses the reaction ATP + H2O = ADP + phosphate + H(+). Functionally, ATP-dependent RNA helicase that plays a role in various aspects of RNA metabolism including pre-mRNA splicing and is thereby involved in different biological processes such as cell cycle regulation or innate immunity. Plays an inhibitory role in TP53 transcriptional activity and subsequently in TP53 controlled cell growth arrest and senescence by inhibiting its EP300 mediated acetylation. Negatively regulates cytosolic RNA-mediated innate immune signaling at least in part by affecting RIPK1/IRF7 interactions. Alternatively, possesses antiviral activity by recognizing gammaherpesvirus transcripts in the context of lytic reactivation. Plays an essential role in cell cycle regulation in vascular smooth muscle cells by interacting with and regulating FANCA (Fanconi anemia complementation group A) mRNA. This chain is ATP-dependent RNA helicase DDX24 (DDX24), found in Pongo abelii (Sumatran orangutan).